The chain runs to 182 residues: Probable RNA 2'-phosphotransferase (182 aa).

Belongs to the KptA/TPT1 family.

Functionally, removes the 2'-phosphate from RNA via an intermediate in which the phosphate is ADP-ribosylated by NAD followed by a presumed transesterification to release the RNA and generate ADP-ribose 1''-2''-cyclic phosphate (APPR&gt;P). May function as an ADP-ribosylase. In Flavobacterium johnsoniae (strain ATCC 17061 / DSM 2064 / JCM 8514 / BCRC 14874 / CCUG 350202 / NBRC 14942 / NCIMB 11054 / UW101) (Cytophaga johnsonae), this protein is Probable RNA 2'-phosphotransferase.